A 162-amino-acid chain; its full sequence is Large ribosomal subunit protein uL30 (162 aa).

This sequence belongs to the universal ribosomal protein uL30 family. Part of the 50S ribosomal subunit.

This is Large ribosomal subunit protein uL30 from Desulfurococcus amylolyticus (strain DSM 18924 / JCM 16383 / VKM B-2413 / 1221n) (Desulfurococcus kamchatkensis).